We begin with the raw amino-acid sequence, 257 residues long: Metallo-beta-lactamase type 2 (257 aa).

A signal peptide spans Met-1–Ala-30. Residues His-116, His-118, Asp-120, His-179, and Cys-198 each coordinate Zn(2+). Substrate-binding residues include Lys-201 and Asn-210. His-240 contributes to the Zn(2+) binding site.

This sequence belongs to the metallo-beta-lactamase superfamily. Class-B beta-lactamase family. In terms of assembly, monomer. It depends on Zn(2+) as a cofactor.

Its subcellular location is the periplasm. The enzyme catalyses a beta-lactam + H2O = a substituted beta-amino acid. Its function is as follows. Confers resistance to the different beta-lactams antibiotics (penicillin, cephalosporin and carbapenem) via the hydrolysis of the beta-lactam ring. The protein is Metallo-beta-lactamase type 2 of Bacillus sp. (strain 170).